The chain runs to 323 residues: THO complex subunit 6 homolog (323 aa).

6 WD repeats span residues Leu-6 to Ala-45, Ala-58 to Ala-96, Leu-108 to Val-147, Gly-150 to Cys-189, Arg-200 to Val-238, and Cys-279 to Leu-321.

This sequence belongs to the WD repeat THOC6 family. As to quaternary structure, component of the THO subcomplex, which is composed of thoc1, thoc2, thoc3, thoc5, thoc6 and thoc7. Component of the transcription/export (TREX) complex at least composed of alyref/thoc4, ddx39b, sarnp/cip29, chtop and the THO subcomplex.

It is found in the nucleus. It localises to the nucleus speckle. Component of the THO subcomplex of the TREX complex which is thought to couple mRNA transcription, processing and nuclear export, and which specifically associates with spliced mRNA and not with unspliced pre-mRNA. Plays a key structural role in the oligomerization of the THO-DDX39B complex. TREX is recruited to spliced mRNAs by a transcription-independent mechanism, binds to mRNA upstream of the exon-junction complex (EJC) and is recruited in a splicing- and cap-dependent manner to a region near the 5' end of the mRNA where it functions in mRNA export to the cytoplasm via the TAP/NXF1 pathway. Plays a role in apoptosis negative control involved in brain development. The polypeptide is THO complex subunit 6 homolog (thoc6) (Danio rerio (Zebrafish)).